The following is an 875-amino-acid chain: E3 SUMO-protein ligase SIZ1 (875 aa).

Residues 12-46 (LAYFRIKELKDILNQLGLPKQGKKQDLIDRVLALL) form the SAP domain. The segment at 114 to 169 (KVRCICSSTMVNDSMIQCEDQRCQVWQHLNCVLIPDKPGESAEVPPVFYCELCRLS) adopts a PHD-type zinc-finger fold. An SP-RING-type zinc finger spans residues 349 to 430 (SDLEVVAESV…FNRITSLLRN (82 aa)). Residues C380, H382, C403, and C406 each contribute to the Zn(2+) site. The segment at 796-820 (GGGGNEEPAPADVNSQPQIPSTETG) is disordered. Residues 808–819 (VNSQPQIPSTET) show a composition bias toward polar residues.

It belongs to the PIAS family.

The protein resides in the nucleus. Its pathway is protein modification; protein sumoylation. Probable SUMO E3 ligase that may regulate Pi starvation responses. This chain is E3 SUMO-protein ligase SIZ1 (SIZ1), found in Oryza sativa subsp. japonica (Rice).